Reading from the N-terminus, the 68-residue chain is Conotoxin Ar5.3 (68 aa).

The first 19 residues, 1-19 (MLCLPVFIILLLLASPAAS), serve as a signal peptide directing secretion. A propeptide spanning residues 20 to 53 (NPLEKRIQNDLIRAALEDADMENDPRSIIDSVKT) is cleaved from the precursor.

This sequence belongs to the conotoxin T superfamily. Post-translationally, contains 2 disulfide bonds that can be either 'C1-C3, C2-C4' or 'C1-C4, C2-C3', since these disulfide connectivities have been observed for conotoxins with cysteine framework V (for examples, see AC P0DQQ7 and AC P81755). In terms of tissue distribution, expressed by the venom duct.

The protein localises to the secreted. The polypeptide is Conotoxin Ar5.3 (Conus arenatus (Sand-dusted cone)).